The chain runs to 313 residues: Putative S-adenosyl-L-methionine-dependent methyltransferase MAV_5149 (313 aa).

Residues aspartate 135 and 164–165 (DL) each bind S-adenosyl-L-methionine.

Belongs to the UPF0677 family.

In terms of biological role, exhibits S-adenosyl-L-methionine-dependent methyltransferase activity. The sequence is that of Putative S-adenosyl-L-methionine-dependent methyltransferase MAV_5149 from Mycobacterium avium (strain 104).